Here is a 210-residue protein sequence, read N- to C-terminus: Na(+)-translocating NADH-quinone reductase subunit D (210 aa).

5 helical membrane passes run 42–62 (FVMT…VSLI), 72–92 (IIVQ…VLKA), 103–123 (VFVG…AFAM), 131–151 (LIDG…VGFF), and 178–198 (NGLM…IWVI).

Belongs to the NqrDE/RnfAE family. Composed of six subunits; NqrA, NqrB, NqrC, NqrD, NqrE and NqrF.

Its subcellular location is the cell inner membrane. It carries out the reaction a ubiquinone + n Na(+)(in) + NADH + H(+) = a ubiquinol + n Na(+)(out) + NAD(+). With respect to regulation, this reaction is tightly coupled to the Na(+) pumping activity and specifically requires Na(+) for activity. Inhibited by korormicin and 2-N-heptyl-4-hydroxyquinoline N-oxide (HQNO). In terms of biological role, NQR complex catalyzes the reduction of ubiquinone-1 to ubiquinol by two successive reactions, coupled with the transport of Na(+) ions from the cytoplasm to the periplasm. NqrA to NqrE are probably involved in the second step, the conversion of ubisemiquinone to ubiquinol. This is Na(+)-translocating NADH-quinone reductase subunit D from Vibrio alginolyticus.